The primary structure comprises 741 residues: NAD(P)H-quinone oxidoreductase subunit 5, chloroplastic (741 aa).

A run of 16 helical transmembrane segments spans residues 9–29, 40–60, 89–109, 125–145, 147–167, 185–205, 219–239, 258–278, 289–311, 327–347, 354–374, 396–416, 425–445, 549–569, 605–625, and 721–741; these read WIIP…LLLF, WAFQ…NLSI, IDPL…LVLI, FAYM…SNLI, IYIF…FWFT, GDFG…SFEF, NQVN…GAIA, TPIS…FLVA, HIMN…LALA, LGYM…FHLI, ALLF…VGYC, NSFL…CFWS, WLYS…TAFY, LFPI…GIPL, LFSV…YKPV, and YLFF…FLNL.

It belongs to the complex I subunit 5 family. NDH is composed of at least 16 different subunits, 5 of which are encoded in the nucleus.

The protein resides in the plastid. It localises to the chloroplast thylakoid membrane. It catalyses the reaction a plastoquinone + NADH + (n+1) H(+)(in) = a plastoquinol + NAD(+) + n H(+)(out). The enzyme catalyses a plastoquinone + NADPH + (n+1) H(+)(in) = a plastoquinol + NADP(+) + n H(+)(out). In terms of biological role, NDH shuttles electrons from NAD(P)H:plastoquinone, via FMN and iron-sulfur (Fe-S) centers, to quinones in the photosynthetic chain and possibly in a chloroplast respiratory chain. The immediate electron acceptor for the enzyme in this species is believed to be plastoquinone. Couples the redox reaction to proton translocation, and thus conserves the redox energy in a proton gradient. The sequence is that of NAD(P)H-quinone oxidoreductase subunit 5, chloroplastic (ndhF) from Symphyotrichum cordifolium (Heart-leaved aster).